The primary structure comprises 364 residues: Paraneoplastic antigen Ma2 homolog (364 aa).

Ala2 carries the post-translational modification N-acetylalanine. The segment covering 335–353 has biased composition (acidic residues); it reads EEEEASFENESIEEPEEGD. Positions 335-364 are disordered; the sequence is EEEEASFENESIEEPEEGDGYGGWNHEGDD. Over residues 354 to 364 the composition is skewed to gly residues; that stretch reads GYGGWNHEGDD.

This sequence belongs to the PNMA family.

It localises to the nucleus. The protein resides in the nucleolus. The chain is Paraneoplastic antigen Ma2 homolog (PNMA2) from Macaca fascicularis (Crab-eating macaque).